We begin with the raw amino-acid sequence, 129 residues long: MPTYNQLVRFGRKSKTRKTKSPALESNPFKSGVCLVVKTVTPKKPNSALRKIATVRLSNKRTVNAYIPGEKHSVKEHDRVLVRGGQVPDLPGVKYHIVLGAYDIAGVKGRKQGRSRYGAPSKQVAVTKK.

The interval 1-25 (MPTYNQLVRFGRKSKTRKTKSPALE) is disordered. Basic residues predominate over residues 10 to 20 (FGRKSKTRKTK). D89 carries the 3-methylthioaspartic acid modification. Residues 110-129 (RKQGRSRYGAPSKQVAVTKK) are disordered.

It belongs to the universal ribosomal protein uS12 family. In terms of assembly, part of the 30S ribosomal subunit. Contacts proteins S8 and S17. May interact with IF1 in the 30S initiation complex.

Its function is as follows. With S4 and S5 plays an important role in translational accuracy. Interacts with and stabilizes bases of the 16S rRNA that are involved in tRNA selection in the A site and with the mRNA backbone. Located at the interface of the 30S and 50S subunits, it traverses the body of the 30S subunit contacting proteins on the other side and probably holding the rRNA structure together. The combined cluster of proteins S8, S12 and S17 appears to hold together the shoulder and platform of the 30S subunit. This is Small ribosomal subunit protein uS12 from Rickettsia canadensis (strain McKiel).